Here is a 567-residue protein sequence, read N- to C-terminus: Geraniol synthase, chloroplastic (567 aa).

The N-terminal 63 residues, 1-63 (MSCARITVTL…GDNSQRKNTR (63 aa)), are a transit peptide targeting the chloroplast. Positions 48 to 75 (STPLINGDNSQRKNTRQHMEESSSKRRE) are disordered. A compositionally biased stretch (basic and acidic residues) spans 64–75 (QHMEESSSKRRE). The (2E)-geranyl diphosphate site is built by R286, D323, D327, R466, and D469. Positions 323 and 327 each coordinate Mn(2+). Residues 323 to 327 (DDIFD) carry the DDXXD motif motif. Mn(2+) contacts are provided by D469, T473, and E477.

The protein belongs to the terpene synthase family. Tpsb subfamily. Homodimer. Mn(2+) serves as cofactor. Expressed in the peltate glandular trichomes of the leaves.

The protein resides in the plastid. The protein localises to the chloroplast. It carries out the reaction (2E)-geranyl diphosphate + H2O = (2E)-geraniol + diphosphate. Its pathway is secondary metabolite biosynthesis; terpenoid biosynthesis. Its function is as follows. Monoterpene synthase that catalyzes the formation of geraniol from geranyl diphosphate. This chain is Geraniol synthase, chloroplastic (GES), found in Ocimum basilicum (Sweet basil).